The primary structure comprises 358 residues: MRARFGDRAPWLVETTLLRRRAAGKLGELCPNVGVSQWLFTDEALQQATAAPVARHRARRLAGRVVHDATCSIGTELAALRELAVRAVGSDIDPVRLAMARHNLAALGMEADLCRADVLHPVTRDAVVVIDPARRSNGRRRFHLADYQPGLGPLLDRYRGRDVVVKCAPGIDFEEVGRLGFEGEIEVISYRGGVREACLWSAGLAGSGIRRRASILDSGEQIGDDEPDDCGVRPAGKWIVDPDGAVVRAGLVRNYGARHGLWQLDPQIAYLSGDRLPPALRGFEVLEQLAFDERRLRQVLSALDCGAAEILVRGVAIDPDALRRRLRLRGSRPLAVVITRIGAGSLSHVTAYVCRPSR.

This sequence belongs to the methyltransferase superfamily.

This is an uncharacterized protein from Mycobacterium tuberculosis (strain CDC 1551 / Oshkosh).